Here is a 426-residue protein sequence, read N- to C-terminus: Pyrophosphate--fructose 6-phosphate 1-phosphotransferase 2 (426 aa).

Glycine 15 serves as a coordination point for diphosphate. Aspartate 114 is a binding site for Mg(2+). Residues 140–142 (TID), 186–188 (MGR), glutamate 247, and 308–311 (YELR) contribute to the substrate site. The Proton acceptor role is filled by aspartate 142.

The protein belongs to the phosphofructokinase type A (PFKA) family. PPi-dependent PFK group II subfamily. Clade 'Short' sub-subfamily. As to quaternary structure, homotetramer. Mg(2+) serves as cofactor.

It is found in the cytoplasm. It catalyses the reaction beta-D-fructose 6-phosphate + diphosphate = beta-D-fructose 1,6-bisphosphate + phosphate + H(+). It participates in carbohydrate degradation; glycolysis; D-glyceraldehyde 3-phosphate and glycerone phosphate from D-glucose: step 3/4. Non-allosteric. Functionally, catalyzes the phosphorylation of D-fructose 6-phosphate, the first committing step of glycolysis. Uses inorganic phosphate (PPi) as phosphoryl donor instead of ATP like common ATP-dependent phosphofructokinases (ATP-PFKs), which renders the reaction reversible, and can thus function both in glycolysis and gluconeogenesis. Consistently, PPi-PFK can replace the enzymes of both the forward (ATP-PFK) and reverse (fructose-bisphosphatase (FBPase)) reactions. This chain is Pyrophosphate--fructose 6-phosphate 1-phosphotransferase 2 (pfk2), found in Trichomonas vaginalis (strain ATCC PRA-98 / G3).